The sequence spans 165 residues: GTPase activating protein 1 (165 aa).

Residues 1-105 (MLGHLVGLVK…VVKMKIEGVA (105 aa)) form the C2 domain. 7 residues coordinate Ca(2+): Arg22, Asp23, Asp28, Asp74, Lys75, Asp76, and Asp81.

It belongs to the plant CAR protein family. As to quaternary structure, binds to PYR/PYL/RCAR abscisic acid intracellular receptors in an ABA-independent manner, both at the plasma membrane and in the nucleus. Binds phospholipids in a Ca(2+)-dependent manner. Interacts with YchF1.

Its subcellular location is the cell membrane. The protein localises to the nucleus. It localises to the cytoplasm. It is found in the cytosol. Mediates the transient calcium-dependent interaction of PYR/PYL/RCAR abscisic acid (ABA) receptors with the plasma membrane and thus regulates ABA sensitivity. Stimulates the GTPase/ATPase activities of YchF1, and regulates its subcellular localization. Promotes tolerance towards salinity stress by limiting the accumulation of reactive oxygen species (ROS). Promotes resistance to bacterial pathogens. This is GTPase activating protein 1 from Oryza sativa subsp. indica (Rice).